The sequence spans 443 residues: GFKAGVKDYRLTYYTPDYETKDTDILAAFRVTPQPGVPAEEAGAAVAAESSTGTWTTVWTDGLTSLDRYKGRCYHIEAVVGEENQYIAYVAYPLDLFEEGSVTNMFTSIVGNVFGFKALRALRLEDLRIPPAYSKTFQGPPHGIQAERDKLNKYGRPLLGCTIKPKLGLSAKNYGRAVYECLRGGLDFTKDDENVNSQPFMRWRDRFLFCAEALYKAQAETGEIKGHYLNATAATCEEMMKRAIFARELGVPIVMHDYLTGGFTANTSLAHYCRDNGLLLHIHRAMHAVIDRQKNHGMHFRVLAKALRMSGGDHIHAGTVVGKLEGEREMTLGFVDLLRDDYIEKDRSRGIFFTQDWVSMPGVLPVASGGIHVWHMPALTEIFGDDSVLQFGGGTLGHPWGNAPGAVANRVALEACVQARNEGRDLAREGNEIIREACSWSPE.

Lysine 3 carries the N6,N6,N6-trimethyllysine modification. Substrate contacts are provided by asparagine 112 and threonine 162. Lysine 164 serves as the catalytic Proton acceptor. Lysine 166 contributes to the substrate binding site. 3 residues coordinate Mg(2+): lysine 190, aspartate 192, and glutamate 193. Lysine 190 bears the N6-carboxylysine mark. The active-site Proton acceptor is histidine 283. Positions 284, 316, and 368 each coordinate substrate.

The protein belongs to the RuBisCO large chain family. Type I subfamily. As to quaternary structure, heterohexadecamer of 8 large chains and 8 small chains; disulfide-linked. The disulfide link is formed within the large subunit homodimers. It depends on Mg(2+) as a cofactor. The disulfide bond which can form in the large chain dimeric partners within the hexadecamer appears to be associated with oxidative stress and protein turnover.

It localises to the plastid. The protein localises to the chloroplast. It catalyses the reaction 2 (2R)-3-phosphoglycerate + 2 H(+) = D-ribulose 1,5-bisphosphate + CO2 + H2O. It carries out the reaction D-ribulose 1,5-bisphosphate + O2 = 2-phosphoglycolate + (2R)-3-phosphoglycerate + 2 H(+). RuBisCO catalyzes two reactions: the carboxylation of D-ribulose 1,5-bisphosphate, the primary event in carbon dioxide fixation, as well as the oxidative fragmentation of the pentose substrate in the photorespiration process. Both reactions occur simultaneously and in competition at the same active site. The chain is Ribulose bisphosphate carboxylase large chain from Iris germanica (Bearded iris).